Reading from the N-terminus, the 309-residue chain is UDP-N-acetylenolpyruvoylglucosamine reductase (309 aa).

The FAD-binding PCMH-type domain maps to 34–221 (RVGGPAQVLF…TAAREAAQPI (188 aa)). The active site involves Arg179. The active-site Proton donor is the Ser228. The active site involves Glu298.

The protein belongs to the MurB family. FAD serves as cofactor.

The protein localises to the cytoplasm. It catalyses the reaction UDP-N-acetyl-alpha-D-muramate + NADP(+) = UDP-N-acetyl-3-O-(1-carboxyvinyl)-alpha-D-glucosamine + NADPH + H(+). The protein operates within cell wall biogenesis; peptidoglycan biosynthesis. In terms of biological role, cell wall formation. This chain is UDP-N-acetylenolpyruvoylglucosamine reductase, found in Methylorubrum populi (strain ATCC BAA-705 / NCIMB 13946 / BJ001) (Methylobacterium populi).